Reading from the N-terminus, the 337-residue chain is Transaldolase (337 aa).

A Nuclear localization signal motif is present at residues 1 to 10; it reads MSGSPVKRQR. Position 115 is an N6-acetyllysine (Lys-115). Catalysis depends on Lys-142, which acts as the Schiff-base intermediate with substrate. Lys-219 carries the post-translational modification N6-acetyllysine. Phosphoserine is present on residues Ser-237 and Ser-256. N6-acetyllysine is present on residues Lys-269, Lys-286, and Lys-321.

This sequence belongs to the transaldolase family. Type 1 subfamily. Homodimer. Interacts with KPNA1 and KPNA4.

It localises to the nucleus. It is found in the cytoplasm. It carries out the reaction D-sedoheptulose 7-phosphate + D-glyceraldehyde 3-phosphate = D-erythrose 4-phosphate + beta-D-fructose 6-phosphate. It participates in carbohydrate degradation; pentose phosphate pathway; D-glyceraldehyde 3-phosphate and beta-D-fructose 6-phosphate from D-ribose 5-phosphate and D-xylulose 5-phosphate (non-oxidative stage): step 2/3. In terms of biological role, catalyzes the rate-limiting step of the non-oxidative phase in the pentose phosphate pathway. Catalyzes the reversible conversion of sedheptulose-7-phosphate and D-glyceraldehyde 3-phosphate into erythrose-4-phosphate and beta-D-fructose 6-phosphate. The polypeptide is Transaldolase (TALDO1) (Cricetulus griseus (Chinese hamster)).